A 188-amino-acid polypeptide reads, in one-letter code: Probable chorismate pyruvate-lyase (188 aa).

Positions 90, 128, and 175 each coordinate substrate.

It belongs to the UbiC family.

The protein localises to the cytoplasm. It carries out the reaction chorismate = 4-hydroxybenzoate + pyruvate. Its pathway is cofactor biosynthesis; ubiquinone biosynthesis. Functionally, removes the pyruvyl group from chorismate, with concomitant aromatization of the ring, to provide 4-hydroxybenzoate (4HB) for the ubiquinone pathway. The chain is Probable chorismate pyruvate-lyase from Marinobacter nauticus (strain ATCC 700491 / DSM 11845 / VT8) (Marinobacter aquaeolei).